Reading from the N-terminus, the 432-residue chain is Anaerobic glycerol-3-phosphate dehydrogenase subunit B (432 aa).

The protein belongs to the anaerobic G-3-P dehydrogenase subunit B family. In terms of assembly, composed of a catalytic GlpA/B dimer and of membrane bound GlpC. It depends on FMN as a cofactor.

It carries out the reaction a quinone + sn-glycerol 3-phosphate = dihydroxyacetone phosphate + a quinol. The protein operates within polyol metabolism; glycerol degradation via glycerol kinase pathway; glycerone phosphate from sn-glycerol 3-phosphate (anaerobic route): step 1/1. Functionally, conversion of glycerol 3-phosphate to dihydroxyacetone. Uses fumarate or nitrate as electron acceptor. This Haemophilus influenzae (strain PittEE) protein is Anaerobic glycerol-3-phosphate dehydrogenase subunit B.